The primary structure comprises 907 residues: Gamma-tubulin complex component 3 (907 aa).

Ala2 carries the post-translational modification N-acetylalanine. Ser113 bears the Phosphoserine mark. The segment covering 210 to 230 (NQPSSQATTSKGVPSAVSRNM) has biased composition (polar residues). The segment at 210-241 (NQPSSQATTSKGVPSAVSRNMTRSRREGDTGG) is disordered.

This sequence belongs to the TUBGCP family. Component of the gamma-tubulin ring complex (gTuRC) consisting of TUBGCP2, TUBGCP3, TUBGCP4, TUBGCP5 and TUBGCP6 and gamma-tubulin TUBG1 or TUBG2. TUBGCP2, TUBGCP3, TUBGCP4, TUBGCP5 and TUBGCP6 assemble in a 5:5:2:1:1 stoichiometry; each is associated with a gamma-tubulin, thereby arranging 14 gamma-tubulins in a helical manner. Gamma-tubulin at the first position is blocked by TUBGCP3 at the last position, allowing 13 protafilaments to grow into a microtubule. The gTuRC (via TUBGCP3 and TUBGCP6) interacts with ACTB and MZT1; the interactions form a luminal bridge that stabilizes the initial structure during complex assembly. The gTuRC (via TUBGCP2) interacts with MZT2A/MZT2B and CDK5RAP2 (via CM1 motif); the interactions play a role in gTuRC activation. Interacts with NIN (via N-terminus); the interaction may promote recruitment of the gamma-tubulin ring complex to the centrosome. Ubiquitously expressed.

Its subcellular location is the cytoplasm. The protein resides in the cytoskeleton. It localises to the microtubule organizing center. It is found in the centrosome. Component of the gamma-tubulin ring complex (gTuRC) which mediates microtubule nucleation. The gTuRC regulates the minus-end nucleation of alpha-beta tubulin heterodimers that grow into microtubule protafilaments, a critical step in centrosome duplication and spindle formation. In Homo sapiens (Human), this protein is Gamma-tubulin complex component 3 (TUBGCP3).